The following is a 169-amino-acid chain: Peptide methionine sulfoxide reductase MsrA 1 (169 aa).

Residue Cys12 is part of the active site.

This sequence belongs to the MsrA Met sulfoxide reductase family.

It catalyses the reaction L-methionyl-[protein] + [thioredoxin]-disulfide + H2O = L-methionyl-(S)-S-oxide-[protein] + [thioredoxin]-dithiol. The enzyme catalyses [thioredoxin]-disulfide + L-methionine + H2O = L-methionine (S)-S-oxide + [thioredoxin]-dithiol. Has an important function as a repair enzyme for proteins that have been inactivated by oxidation. Catalyzes the reversible oxidation-reduction of methionine sulfoxide in proteins to methionine. In Staphylococcus aureus (strain Mu50 / ATCC 700699), this protein is Peptide methionine sulfoxide reductase MsrA 1 (msrA1).